We begin with the raw amino-acid sequence, 206 residues long: Ubiquitin-conjugating enzyme E2 S (206 aa).

One can recognise a UBC core domain in the interval Gln-14–Gln-160. The Glycyl thioester intermediate role is filled by Cys-98. Residues Gly-165–Lys-191 form a disordered region. Residues Asp-168–Lys-191 are compositionally biased toward basic and acidic residues.

The protein belongs to the ubiquitin-conjugating enzyme family.

The catalysed reaction is S-ubiquitinyl-[E1 ubiquitin-activating enzyme]-L-cysteine + [E2 ubiquitin-conjugating enzyme]-L-cysteine = [E1 ubiquitin-activating enzyme]-L-cysteine + S-ubiquitinyl-[E2 ubiquitin-conjugating enzyme]-L-cysteine.. Its pathway is protein modification; protein ubiquitination. In terms of biological role, catalyzes the covalent attachment of ubiquitin to other proteins. Acts as an essential factor of the anaphase promoting complex/cyclosome (APC/C), a cell cycle-regulated ubiquitin ligase that controls progression through mitosis. Acts by specifically elongating polyubiquitin chains initiated by the E2 enzyme vih/UbcH10 on APC/C substrates, enhancing the degradation of APC/C substrates by the proteasome and promoting mitotic exit. This Drosophila mojavensis (Fruit fly) protein is Ubiquitin-conjugating enzyme E2 S.